The primary structure comprises 596 residues: Cysteine--tRNA ligase (596 aa).

The tract at residues Met-1–Lys-199 is unknown. Residue Cys-212 participates in Zn(2+) binding. The short motif at Pro-214–Asn-224 is the 'HIGH' region element. 3 residues coordinate Zn(2+): Cys-377, His-403, and Glu-407. The 'KMSKS' region motif lies at Lys-435–Ser-439. Lys-438 serves as a coordination point for ATP.

This sequence belongs to the class-I aminoacyl-tRNA synthetase family. In terms of assembly, monomer. It depends on Zn(2+) as a cofactor.

The protein resides in the cytoplasm. It catalyses the reaction tRNA(Cys) + L-cysteine + ATP = L-cysteinyl-tRNA(Cys) + AMP + diphosphate. The protein is Cysteine--tRNA ligase (cysS) of Mycoplasmopsis pulmonis (strain UAB CTIP) (Mycoplasma pulmonis).